We begin with the raw amino-acid sequence, 720 residues long: NADH-ubiquinone oxidoreductase 78 kDa subunit, mitochondrial (720 aa).

The transit peptide at 1-23 (MNSIKSHILRSSKRYISASSKRL) directs the protein to the mitochondrion. Positions 24–102 (AEVEVTVDGR…GMVVHTDSER (79 aa)) constitute a 2Fe-2S ferredoxin-type domain. [2Fe-2S] cluster-binding residues include cysteine 58, cysteine 69, cysteine 72, and cysteine 86. The region spanning 102–141 (RIKKAREGVTEMLLENHPLDCPVCDQGGECDLQEQSQRYG) is the 4Fe-4S His(Cys)3-ligated-type domain. The 57-residue stretch at 241 to 297 (LKRTETIDVLDAVGSNIRVDTRGIEVMRVLPRLNDDVNEEWISDKTRFACDGLKTQR) folds into the 4Fe-4S Mo/W bis-MGD-type domain.

Belongs to the complex I 75 kDa subunit family. Core subunit of respiratory chain NADH dehydrogenase (Complex I) which is composed of 45 different subunits. This is the largest subunit of complex I and it is a component of the iron-sulfur (IP) fragment of the enzyme. [2Fe-2S] cluster serves as cofactor. It depends on [4Fe-4S] cluster as a cofactor.

The protein localises to the mitochondrion. It carries out the reaction a ubiquinone + NADH + 5 H(+)(in) = a ubiquinol + NAD(+) + 4 H(+)(out). Its function is as follows. Core subunit of the mitochondrial membrane respiratory chain NADH dehydrogenase (Complex I) which catalyzes electron transfer from NADH through the respiratory chain, using ubiquinone as an electron acceptor. Essential for catalysing the entry and efficient transfer of electrons within complex I. Plays a key role in the assembly and stability of complex I and participates in the association of complex I with ubiquinol-cytochrome reductase complex (Complex III) to form supercomplexes. Plays a role in cell wall integrity and is involved in osmotic and oxidative resistance, yeast to hypha transition, and the ability to damage and invade oral epithelial cells. The chain is NADH-ubiquinone oxidoreductase 78 kDa subunit, mitochondrial from Candida albicans (strain SC5314 / ATCC MYA-2876) (Yeast).